Consider the following 334-residue polypeptide: Probable tRNA pseudouridine synthase B (334 aa).

Residue Asp82 is the Nucleophile of the active site. Positions 250-325 (LPKVWIRDSA…IAVDVDKVFM (76 aa)) constitute a PUA domain.

This sequence belongs to the pseudouridine synthase TruB family. Type 2 subfamily.

It carries out the reaction uridine(55) in tRNA = pseudouridine(55) in tRNA. Could be responsible for synthesis of pseudouridine from uracil-55 in the psi GC loop of transfer RNAs. In Thermococcus gammatolerans (strain DSM 15229 / JCM 11827 / EJ3), this protein is Probable tRNA pseudouridine synthase B.